Here is an 86-residue protein sequence, read N- to C-terminus: Photosystem I reaction center subunit PsaK 1 (86 aa).

A propeptide spanning residues 1–8 (MLTSTLLA) is cleaved from the precursor. The next 2 helical transmembrane spans lie at 14 to 34 (LEWSPTVGIIMVIANVIAITF) and 60 to 80 (PALLATTAFGHILGVGLVLGL).

This sequence belongs to the PsaG/PsaK family. In terms of assembly, the cyanobacterial PSI reaction center is composed of one copy each of PsaA,B,C,D,E,F,I,J,K,L,M and X, and forms dimeric and tetrameric complexes.

The protein localises to the cellular thylakoid membrane. The protein is Photosystem I reaction center subunit PsaK 1 (psaK1) of Nostoc sp. (strain PCC 7120 / SAG 25.82 / UTEX 2576).